The primary structure comprises 343 residues: Dihydroorotase (343 aa).

Zn(2+)-binding residues include His-13 and His-15. Residues 15-17 and Asn-41 each bind substrate; that span reads HLR. The Zn(2+) site is built by Lys-99, His-136, and His-174. An N6-carboxylysine modification is found at Lys-99. His-136 provides a ligand contact to substrate. Leu-219 lines the substrate pocket. Residue Asp-247 coordinates Zn(2+). Asp-247 is an active-site residue. The substrate site is built by His-251 and Ala-263.

This sequence belongs to the metallo-dependent hydrolases superfamily. DHOase family. Class II DHOase subfamily. As to quaternary structure, homodimer. Requires Zn(2+) as cofactor.

The catalysed reaction is (S)-dihydroorotate + H2O = N-carbamoyl-L-aspartate + H(+). Its pathway is pyrimidine metabolism; UMP biosynthesis via de novo pathway; (S)-dihydroorotate from bicarbonate: step 3/3. Functionally, catalyzes the reversible cyclization of carbamoyl aspartate to dihydroorotate. This chain is Dihydroorotase, found in Shewanella putrefaciens (strain CN-32 / ATCC BAA-453).